The chain runs to 147 residues: Large ribosomal subunit protein bL9 (147 aa).

This sequence belongs to the bacterial ribosomal protein bL9 family.

Binds to the 23S rRNA. The protein is Large ribosomal subunit protein bL9 of Helicobacter hepaticus (strain ATCC 51449 / 3B1).